We begin with the raw amino-acid sequence, 510 residues long: MSVRPTEITEILKQQIEQYGSRMVVTNVGYVVQVGDGIATVHGLRDVMASELVEFENGVLGIAFNLQEDSVGVIILGDYTGIEEGDEVRATGRIASVPVGPALVGRVVNALGEPIDGKGPINTDKFRPIERIAPGVVMRQDVDTALQTGIKAIDSMIPIGRGQRELIIGDRQTGKTAIAIDTIINQKGKGVICIYVAIGQKRAQVAQTVATLERYGAMEHTIVVAATASDPAALQYIAPYAGCAMGEEIMESGGHALIVYDDLSKHAWAYRQVSLLMRRPPGREAYPGDIFYLHSRLLERAARLRDDLGGGTLTALPIVETQANDVSAYIPTNVISITDGQIYLEPDLFYAGIRPAINVGLSVSRVGGAAQIRAMRQVAGRLRLELAQFRELAAFAQFAAELDPATKRQIDRGLRLTEVLKQPQYEPMPVEEQVAIIWVATNGYLDDVLVEHVREFEKQYLDYLRTSHPQILQRIASERELKDDLIQQLHEVTRAFKQSIWAPPQERVII.

169 to 176 provides a ligand contact to ATP; the sequence is GDRQTGKT.

The protein belongs to the ATPase alpha/beta chains family. As to quaternary structure, F-type ATPases have 2 components, CF(1) - the catalytic core - and CF(0) - the membrane proton channel. CF(1) has five subunits: alpha(3), beta(3), gamma(1), delta(1), epsilon(1). CF(0) has three main subunits: a(1), b(2) and c(9-12). The alpha and beta chains form an alternating ring which encloses part of the gamma chain. CF(1) is attached to CF(0) by a central stalk formed by the gamma and epsilon chains, while a peripheral stalk is formed by the delta and b chains.

The protein resides in the cell membrane. It catalyses the reaction ATP + H2O + 4 H(+)(in) = ADP + phosphate + 5 H(+)(out). In terms of biological role, produces ATP from ADP in the presence of a proton gradient across the membrane. The alpha chain is a regulatory subunit. This chain is ATP synthase subunit alpha, found in Thermomicrobium roseum (strain ATCC 27502 / DSM 5159 / P-2).